We begin with the raw amino-acid sequence, 236 residues long: Phosphoribosylaminoimidazole-succinocarboxamide synthase (236 aa).

Belongs to the SAICAR synthetase family.

The enzyme catalyses 5-amino-1-(5-phospho-D-ribosyl)imidazole-4-carboxylate + L-aspartate + ATP = (2S)-2-[5-amino-1-(5-phospho-beta-D-ribosyl)imidazole-4-carboxamido]succinate + ADP + phosphate + 2 H(+). Its pathway is purine metabolism; IMP biosynthesis via de novo pathway; 5-amino-1-(5-phospho-D-ribosyl)imidazole-4-carboxamide from 5-amino-1-(5-phospho-D-ribosyl)imidazole-4-carboxylate: step 1/2. This is Phosphoribosylaminoimidazole-succinocarboxamide synthase from Hahella chejuensis (strain KCTC 2396).